The primary structure comprises 450 residues: MYTKDTIVAIATPQGNGGIGIIRISGIDALEIAEKLTKKQLKPRYATFCNVYNDNEIIDHGIVIFFKAPLSYTGEDVVEIQAHGNPFILNLIIKAALNCGARMAKAGEFTERAFLNNKLDLAQAEAVADIINASSEIAAKSAAKSLQGDFSKEINNLLEKLIYLRMYVEASIDFPEEEINFLEDQKIHSSLEEIYKVILAIKNSCKQGVILAEGITLILVGKPNAGKSSLLNALAGKESAIVTSIAGTTRDIVKEHIQINGVPMHIIDTAGLRNSDDIIESEGIKRAIKKIQEADQVLFVTDDYTNSQVKFSDIKEIIPEFYDQIPKDIDITYVHNKIDLLKEVPHNHANHIYISAENNIGIDKLKEHILNKVGYTNQNESIYTARERHVTAINNAFEHIKLAKEQLELGNGELLAEELLIVQEYLNSITGEFSSDDLLGEIFSSFCIGK.

Positions 23, 79, and 118 each coordinate (6S)-5-formyl-5,6,7,8-tetrahydrofolate. Residues 214–374 (GITLILVGKP…LKEHILNKVG (161 aa)) enclose the TrmE-type G domain. Residue Asn224 participates in K(+) binding. Residues 224-229 (NAGKSS), 243-249 (TSIAGTT), and 268-271 (DTAG) each bind GTP. Ser228 serves as a coordination point for Mg(2+). K(+) is bound by residues Thr243, Ile245, and Thr248. Thr249 is a binding site for Mg(2+). Lys450 lines the (6S)-5-formyl-5,6,7,8-tetrahydrofolate pocket.

This sequence belongs to the TRAFAC class TrmE-Era-EngA-EngB-Septin-like GTPase superfamily. TrmE GTPase family. As to quaternary structure, homodimer. Heterotetramer of two MnmE and two MnmG subunits. Requires K(+) as cofactor.

It localises to the cytoplasm. Exhibits a very high intrinsic GTPase hydrolysis rate. Involved in the addition of a carboxymethylaminomethyl (cmnm) group at the wobble position (U34) of certain tRNAs, forming tRNA-cmnm(5)s(2)U34. In Francisella tularensis subsp. holarctica (strain FTNF002-00 / FTA), this protein is tRNA modification GTPase MnmE.